Reading from the N-terminus, the 210-residue chain is Troponin I, cardiac muscle (210 aa).

The tract at residues 1 to 43 is disordered; sequence MADGSSDAAREPRPAPAPIRRRSSNYRAYATEPHAKKKSKISA. Residue A2 is modified to N-acetylalanine. Phosphoserine occurs at positions 5 and 6. Phosphoserine; by PKA and PKD/PRKD1 is present on residues S23 and S24. Y26 is modified (phosphotyrosine). T31 bears the Phosphothreonine; by STK4/MST1 mark. The tract at residues 32–79 is involved in binding TNC; sequence EPHAKKKSKISASRKLQLKTLLLQIAKQELEREAEERRGEKGRALSTR. 2 positions are modified to phosphoserine; by PKC/PRKCE: S42 and S44. At T51 the chain carries Phosphothreonine; by STK4/MST1. Position 77 is a phosphoserine (S77). T78 is subject to Phosphothreonine. Residues T129 and T143 each carry the phosphothreonine; by STK4/MST1 modification. The involved in binding TNC and actin stretch occupies residues 129–149; sequence TQKIFDLRGKFKRPTLRRVRI. S150 carries the phosphoserine; by PAK3 modification. S166 bears the Phosphoserine mark. T181 carries the phosphothreonine modification. S199 carries the phosphoserine modification.

Belongs to the troponin I family. In terms of assembly, binds to actin and tropomyosin. Interacts with TRIM63. Interacts with STK4/MST1. Phosphorylated at Ser-42 and Ser-44 by PRKCE; phosphorylation increases myocardium contractile dysfunction. Phosphorylated at Ser-23 and Ser-24 by PRKD1; phosphorylation reduces myofilament calcium sensitivity. Phosphorylated preferentially at Thr-31. Phosphorylation by STK4/MST1 alters its binding affinity to TNNC1 (cardiac Tn-C) and TNNT2 (cardiac Tn-T).

Troponin I is the inhibitory subunit of troponin, the thin filament regulatory complex which confers calcium-sensitivity to striated muscle actomyosin ATPase activity. In Homo sapiens (Human), this protein is Troponin I, cardiac muscle (TNNI3).